A 319-amino-acid polypeptide reads, in one-letter code: Putative replication factor C small subunit R395 (319 aa).

45 to 52 serves as a coordination point for ATP; the sequence is GSPGVGKT.

It belongs to the activator 1 small subunits family. RfcS subfamily.

Functionally, part of the RFC clamp loader complex which loads the PCNA sliding clamp onto DNA. The polypeptide is Putative replication factor C small subunit R395 (Acanthamoeba polyphaga mimivirus (APMV)).